Reading from the N-terminus, the 1053-residue chain is Translation initiation factor IF-2 (1053 aa).

Polar residues predominate over residues 1-20 (MSESKNSGENTLSVTPTKTL). A disordered region spans residues 1-442 (MSESKNSGEN…TATGGEEEER (442 aa)). Low complexity-rich tracts occupy residues 64–76 (EAAP…ATVT) and 83–102 (RPAA…AAVP). 2 stretches are compositionally biased toward pro residues: residues 131–141 (PAQPKAEPVPA) and 150–161 (APVPPVPAPSAP). Positions 178–220 (PVSQAKPIQTAPVQTAPAAQASASQTTGPRPVAAGPRPATGAA) are enriched in low complexity. Positions 255 to 264 (GGRGGPGRGE) are enriched in gly residues. Composition is skewed to basic and acidic residues over residues 279–288 (LTDEEREARA) and 295–353 (RIRE…EAKR). A compositionally biased stretch (low complexity) spans 375 to 386 (TATAAAPAAAAP). Residues 550 to 720 (PRPPVVTIMG…ALQAELLDLK (171 aa)) form the tr-type G domain. Residues 559-566 (GHVDHGKT) form a G1 region. 559 to 566 (GHVDHGKT) contributes to the GTP binding site. The G2 stretch occupies residues 584-588 (GITQH). Residues 606–609 (DTPG) are G3. GTP is bound by residues 606-610 (DTPGH) and 660-663 (NKID). Residues 660–663 (NKID) are G4. Positions 696–698 (SAT) are G5.

Belongs to the TRAFAC class translation factor GTPase superfamily. Classic translation factor GTPase family. IF-2 subfamily.

The protein resides in the cytoplasm. One of the essential components for the initiation of protein synthesis. Protects formylmethionyl-tRNA from spontaneous hydrolysis and promotes its binding to the 30S ribosomal subunits. Also involved in the hydrolysis of GTP during the formation of the 70S ribosomal complex. This chain is Translation initiation factor IF-2, found in Beijerinckia indica subsp. indica (strain ATCC 9039 / DSM 1715 / NCIMB 8712).